Consider the following 210-residue polypeptide: LexA repressor (210 aa).

The H-T-H motif DNA-binding region spans 30–50; the sequence is RVEIAREIGFKSPNAAEEHLK. Catalysis depends on for autocatalytic cleavage activity residues S127 and K164.

The protein belongs to the peptidase S24 family. In terms of assembly, homodimer.

The enzyme catalyses Hydrolysis of Ala-|-Gly bond in repressor LexA.. Functionally, represses a number of genes involved in the response to DNA damage (SOS response), including recA and lexA. In the presence of single-stranded DNA, RecA interacts with LexA causing an autocatalytic cleavage which disrupts the DNA-binding part of LexA, leading to derepression of the SOS regulon and eventually DNA repair. This is LexA repressor from Actinobacillus pleuropneumoniae serotype 5b (strain L20).